We begin with the raw amino-acid sequence, 223 residues long: uncharacterized protein (223 aa).

This is an uncharacterized protein from Treponema pallidum (strain Nichols).